We begin with the raw amino-acid sequence, 352 residues long: Biotin synthase (352 aa).

A Radical SAM core domain is found at 44 to 262; that stretch reads NRVQVSTLLS…LAVARLLMPK (219 aa). Residues Cys59, Cys63, and Cys66 each coordinate [4Fe-4S] cluster. Residues Cys103, Cys134, Cys194, and Arg266 each coordinate [2Fe-2S] cluster.

Belongs to the radical SAM superfamily. Biotin synthase family. Homodimer. [4Fe-4S] cluster is required as a cofactor. Requires [2Fe-2S] cluster as cofactor.

It carries out the reaction (4R,5S)-dethiobiotin + (sulfur carrier)-SH + 2 reduced [2Fe-2S]-[ferredoxin] + 2 S-adenosyl-L-methionine = (sulfur carrier)-H + biotin + 2 5'-deoxyadenosine + 2 L-methionine + 2 oxidized [2Fe-2S]-[ferredoxin]. It participates in cofactor biosynthesis; biotin biosynthesis; biotin from 7,8-diaminononanoate: step 2/2. Its function is as follows. Catalyzes the conversion of dethiobiotin (DTB) to biotin by the insertion of a sulfur atom into dethiobiotin via a radical-based mechanism. The sequence is that of Biotin synthase from Pseudomonas putida (strain W619).